Consider the following 280-residue polypeptide: Shikimate dehydrogenase (NADP(+)) (280 aa).

Residues serine 20–serine 22 and threonine 67 contribute to the shikimate site. Lysine 71 (proton acceptor) is an active-site residue. Glutamate 83 contacts NADP(+). Shikimate contacts are provided by asparagine 92 and aspartate 107. Residues glycine 131–alanine 135, asparagine 155–lysine 160, and leucine 224 each bind NADP(+). Residue tyrosine 226 participates in shikimate binding. Residue glycine 247 coordinates NADP(+).

This sequence belongs to the shikimate dehydrogenase family. Homodimer.

The catalysed reaction is shikimate + NADP(+) = 3-dehydroshikimate + NADPH + H(+). It participates in metabolic intermediate biosynthesis; chorismate biosynthesis; chorismate from D-erythrose 4-phosphate and phosphoenolpyruvate: step 4/7. Functionally, involved in the biosynthesis of the chorismate, which leads to the biosynthesis of aromatic amino acids. Catalyzes the reversible NADPH linked reduction of 3-dehydroshikimate (DHSA) to yield shikimate (SA). In Caldanaerobacter subterraneus subsp. tengcongensis (strain DSM 15242 / JCM 11007 / NBRC 100824 / MB4) (Thermoanaerobacter tengcongensis), this protein is Shikimate dehydrogenase (NADP(+)).